A 420-amino-acid chain; its full sequence is Gamma-glutamyl phosphate reductase (420 aa).

This sequence belongs to the gamma-glutamyl phosphate reductase family.

The protein localises to the cytoplasm. It carries out the reaction L-glutamate 5-semialdehyde + phosphate + NADP(+) = L-glutamyl 5-phosphate + NADPH + H(+). Its pathway is amino-acid biosynthesis; L-proline biosynthesis; L-glutamate 5-semialdehyde from L-glutamate: step 2/2. Functionally, catalyzes the NADPH-dependent reduction of L-glutamate 5-phosphate into L-glutamate 5-semialdehyde and phosphate. The product spontaneously undergoes cyclization to form 1-pyrroline-5-carboxylate. In Neisseria meningitidis serogroup C / serotype 2a (strain ATCC 700532 / DSM 15464 / FAM18), this protein is Gamma-glutamyl phosphate reductase.